Consider the following 333-residue polypeptide: PDZ domain-containing protein GIPC1 (333 aa).

The span at 1–11 (MPLGLGRRKKA) shows a compositional bias: basic residues. The interval 1 to 53 (MPLGLGRRKKAPPLVENEEAEPSRSGLGVGEPGPLGGSAAGESQMGLPPPPAA) is disordered. Positions 27–39 (LGVGEPGPLGGSA) are enriched in gly residues. Position 68 is a phosphoserine (serine 68). In terms of domain architecture, PDZ spans 133–213 (EVEVFKSEEA…GRTFTLKLTE (81 aa)). Residues serine 222, serine 225, and serine 232 each carry the phosphoserine modification. A disordered region spans residues 223 to 244 (QRSAGGHPGSGPQLGTGRGTLR). Gly residues predominate over residues 228–240 (GHPGSGPQLGTGR). Threonine 242 carries the phosphothreonine modification. Serine 247 bears the Phosphoserine mark.

Belongs to the GIPC family. In terms of assembly, interacts with GLUT1 (C-terminus), ACTN1, KIF1B, MYO6 and PLEKHG5. Interacts with RGS19 C-terminus. Interacts with SDC4/syndecan-4 and SEMA4C/semaphorin-4C. In terms of tissue distribution, widely expressed.

It is found in the cytoplasm. The protein localises to the membrane. Inhibits endothelial cell migration (in vitro). May be involved in G protein-linked signaling. The protein is PDZ domain-containing protein GIPC1 (Gipc1) of Mus musculus (Mouse).